The chain runs to 676 residues: Maternal embryonic leucine zipper kinase (676 aa).

Residues 13–265 enclose the Protein kinase domain; it reads YEVYETIGSG…VKHLLDHPWV (253 aa). Residues 19-27 and Lys-42 each bind ATP; that span reads IGSGGFAKV. Residue Asp-134 is the Proton acceptor of the active site. At Thr-169 the chain carries Phosphothreonine; by autocatalysis. Residue Ser-173 is modified to Phosphoserine; by autocatalysis. Residues 284–323 are UBA-like; the sequence is IDEDCITEMAVTFKQSKQRTIQLVSEWKYDQITATYLLLL. An autoinhibitory region region spans residues 328–673; that stretch reads QGRPVRLRAE…VEDILSSSSQ (346 aa). Positions 423–443 are enriched in basic and acidic residues; it reads EHSRPCRQKPERRERTKENKE. The disordered stretch occupies residues 423–518; the sequence is EHSRPCRQKP…QQNGQQGELN (96 aa). A compositionally biased stretch (polar residues) spans 462 to 489; it reads TPTSSRKVKSNRTVMTTPNHNNNKSSEV. Residues 508 to 518 show a composition bias toward low complexity; it reads QQQNGQQGELN. The KA1 domain maps to 624–673; it reads SDFGKVTMQFELEVCLLQKPEVVGIRRQRLKGDAWVYKHLVEDILSSSSQ.

It belongs to the protein kinase superfamily. CAMK Ser/Thr protein kinase family. SNF1 subfamily. In terms of processing, autophosphorylated: autophosphorylation of the T-loop at Thr-169 and Ser-173 is required for activation. In terms of tissue distribution, strongly expressed in the eye, gill, kidney, spleen, muscle, ovary and testis and weakly in the heart, liver, and gut. Expressed in the brain and lateral mesoderm at 12 hours post-fertilization (hpf).

It localises to the cell membrane. The catalysed reaction is L-seryl-[protein] + ATP = O-phospho-L-seryl-[protein] + ADP + H(+). It catalyses the reaction L-threonyl-[protein] + ATP = O-phospho-L-threonyl-[protein] + ADP + H(+). With respect to regulation, activated by autophosphorylation of the T-loop at Thr-169 and Ser-173: in contrast to other members of the SNF1 subfamily, phosphorylation at Thr-169 is not mediated by STK11/LKB1 but via autophosphorylation instead. Its function is as follows. Serine/threonine-protein kinase involved in various processes such as cell cycle regulation, self-renewal of stem cells, apoptosis and splicing regulation. Also plays a role in primitive hematopoiesis, possibly by affecting the expression of genes critical for hematopoiesis. This is Maternal embryonic leucine zipper kinase (melk) from Danio rerio (Zebrafish).